Reading from the N-terminus, the 383-residue chain is Protein FAM217B (383 aa).

Disordered regions lie at residues 1-70 (MNAG…CQGA), 89-115 (ADEDSASDLSDSERIPIPPSPLTPPDL), 200-222 (KAKGGKARPPTAPGTSGALKSPG), 232-251 (SKPLPHQEGASKSGPSRKKA), 284-325 (QTLE…HIRV), and 338-383 (SCKA…YKLK). The segment covering 8–43 (NKVQHSKNSSGKRQSKSQVPHASSQPRSSLTAVTQP) has biased composition (polar residues). The segment covering 44 to 56 (TEEKLKESISPEA) has biased composition (basic and acidic residues). Residues 374–383 (GVKQNTYKLK) are compositionally biased toward polar residues.

It belongs to the FAM217 family.

The protein is Protein FAM217B (FAM217B) of Homo sapiens (Human).